A 305-amino-acid polypeptide reads, in one-letter code: Homoserine kinase (305 aa).

Residue 90–100 (PLARGLGSSAS) participates in ATP binding.

Belongs to the GHMP kinase family. Homoserine kinase subfamily.

The protein localises to the cytoplasm. It catalyses the reaction L-homoserine + ATP = O-phospho-L-homoserine + ADP + H(+). The protein operates within amino-acid biosynthesis; L-threonine biosynthesis; L-threonine from L-aspartate: step 4/5. Its function is as follows. Catalyzes the ATP-dependent phosphorylation of L-homoserine to L-homoserine phosphate. The protein is Homoserine kinase of Staphylococcus haemolyticus (strain JCSC1435).